A 380-amino-acid chain; its full sequence is tRNA-specific 2-thiouridylase MnmA (380 aa).

Residues Gly14 to Ser21 and Met40 contribute to the ATP site. The tract at residues Asn100 to Asp102 is interaction with target base in tRNA. Cys105 functions as the Nucleophile in the catalytic mechanism. An intrachain disulfide couples Cys105 to Cys203. Gly129 is an ATP binding site. The tract at residues Lys153 to Gln155 is interaction with tRNA. Cys203 (cysteine persulfide intermediate) is an active-site residue. The tract at residues Arg322 to Tyr323 is interaction with tRNA.

It belongs to the MnmA/TRMU family.

Its subcellular location is the cytoplasm. The catalysed reaction is S-sulfanyl-L-cysteinyl-[protein] + uridine(34) in tRNA + AH2 + ATP = 2-thiouridine(34) in tRNA + L-cysteinyl-[protein] + A + AMP + diphosphate + H(+). Functionally, catalyzes the 2-thiolation of uridine at the wobble position (U34) of tRNA, leading to the formation of s(2)U34. The polypeptide is tRNA-specific 2-thiouridylase MnmA (Leptothrix cholodnii (strain ATCC 51168 / LMG 8142 / SP-6) (Leptothrix discophora (strain SP-6))).